Reading from the N-terminus, the 93-residue chain is Small ribosomal subunit protein bS20 (93 aa).

The protein belongs to the bacterial ribosomal protein bS20 family.

In terms of biological role, binds directly to 16S ribosomal RNA. This is Small ribosomal subunit protein bS20 from Hydrogenobaculum sp. (strain Y04AAS1).